Reading from the N-terminus, the 343-residue chain is Transmembrane protein 120A (343 aa).

Over Met1–Glu132 the chain is Cytoplasmic. Lys130 is a CoA binding site. A helical membrane pass occupies residues Tyr133–Arg152. Residues Phe153–Arg158 lie on the Extracellular side of the membrane. A helical membrane pass occupies residues Val159–Ile177. The Cytoplasmic portion of the chain corresponds to Arg178–Lys190. Residues Ser187 and Arg188 each coordinate CoA. The chain crosses the membrane as a helical span at residues Gly191–Thr209. The Extracellular portion of the chain corresponds to Trp210–Lys218. The chain crosses the membrane as a helical span at residues Phe219–Tyr240. CoA contacts are provided by Gln237, Tyr240, Gln241, and His283. Over Gln241–Arg270 the chain is Cytoplasmic. A helical membrane pass occupies residues Gly271–Phe294. Over Asn295 to Glu304 the chain is Extracellular. A helical membrane pass occupies residues Trp305–His330. Over Gln331–Asp343 the chain is Cytoplasmic. Lys332 contributes to the CoA binding site.

It belongs to the TMEM120 family. Homodimer. Forms heterooligomer with TMEM120B. Interacts with PKD2; TMEM120A inhibits PKD2 channel activity through the physical association of PKD2 with TMEM120A.

It localises to the cell membrane. The protein resides in the nucleus inner membrane. It is found in the endoplasmic reticulum. Functionally, multifunctional protein involved in mechanosensation, and plays an essential role in lipid metabolism and adipocyte differentiation. May function as a potential ion channel involved in sensing mechanical stimuli. Mediates the mechanosensitivity of the PKD2-TMEM120A channel complex through direct physical interaction. TMEM120A seems to affect mechanosensation by inhibiting PIEZO2 channels, possibly by altering cellular lipid content. TMEM120A is structurally similar to a lipid-modifying enzyme, ELOVL7, and contains a bound coenzyme A molecule, which suggests it might function as an enzyme in lipid metabolism. Additionnaly, implicated in innate immune response against Zika virus. Acts as a key activator of the antiviral signaling involving STING1. The polypeptide is Transmembrane protein 120A (Rattus norvegicus (Rat)).